Here is a 319-residue protein sequence, read N- to C-terminus: Ankyrin repeat domain-containing protein 1 (319 aa).

Residues 63-89 are a coiled coil; the sequence is EKEREAELKKKKLEQRSKLENLEDLEI. ANK repeat units lie at residues 152–181, 185–214, 218–247, 251–280, and 284–315; these read YKRTALHRACLEGHLAIVEKLIEAGAQIEF, LESTAIHWASRGGNLDVLKLLLNKGAKISA, LLSTALHVAVRTGHYECAEHLIACEADLNA, EGDTPLHDAVRLNRYKMIRLLITYGADLNV, and AGKTPMDLVLNWQNGTKAIFDSLKENSYKASR.

In terms of assembly, interacts with TTN/titin and YBX1. Expressed in heart. In postnatal neonatal heart, it is expressed in an asymmetrical way; left ventricle favored towards right ventricle. Whether or not this could be correlated with a hypertrophic heart is still a matter of debate. Levels increase gradually from newborn to adult.

The protein localises to the nucleus. In terms of biological role, may play an important role in endothelial cell activation. May act as a nuclear transcription factor that negatively regulates the expression of cardiac genes. The sequence is that of Ankyrin repeat domain-containing protein 1 (ANKRD1) from Sus scrofa (Pig).